A 757-amino-acid chain; its full sequence is Probable inorganic carbon transporter subunit DabA (757 aa).

Zn(2+)-binding residues include Cys-321, Asp-323, His-475, and Cys-490.

The protein belongs to the inorganic carbon transporter (TC 9.A.2) DabA family. Forms a complex with DabB. Zn(2+) serves as cofactor.

Its subcellular location is the cell inner membrane. Part of an energy-coupled inorganic carbon pump. This chain is Probable inorganic carbon transporter subunit DabA, found in Idiomarina loihiensis (strain ATCC BAA-735 / DSM 15497 / L2-TR).